We begin with the raw amino-acid sequence, 254 residues long: Imidazole glycerol phosphate synthase subunit HisF (254 aa).

Active-site residues include Asp-11 and Asp-130.

This sequence belongs to the HisA/HisF family. Heterodimer of HisH and HisF.

Its subcellular location is the cytoplasm. The catalysed reaction is 5-[(5-phospho-1-deoxy-D-ribulos-1-ylimino)methylamino]-1-(5-phospho-beta-D-ribosyl)imidazole-4-carboxamide + L-glutamine = D-erythro-1-(imidazol-4-yl)glycerol 3-phosphate + 5-amino-1-(5-phospho-beta-D-ribosyl)imidazole-4-carboxamide + L-glutamate + H(+). Its pathway is amino-acid biosynthesis; L-histidine biosynthesis; L-histidine from 5-phospho-alpha-D-ribose 1-diphosphate: step 5/9. Functionally, IGPS catalyzes the conversion of PRFAR and glutamine to IGP, AICAR and glutamate. The HisF subunit catalyzes the cyclization activity that produces IGP and AICAR from PRFAR using the ammonia provided by the HisH subunit. The polypeptide is Imidazole glycerol phosphate synthase subunit HisF (Microcystis aeruginosa (strain NIES-843 / IAM M-2473)).